The primary structure comprises 180 residues: Large ribosomal subunit protein uL5 (180 aa).

The protein belongs to the universal ribosomal protein uL5 family. In terms of assembly, part of the 50S ribosomal subunit; part of the 5S rRNA/L5/L18/L25 subcomplex. Contacts the 5S rRNA and the P site tRNA. Forms a bridge to the 30S subunit in the 70S ribosome.

This is one of the proteins that bind and probably mediate the attachment of the 5S RNA into the large ribosomal subunit, where it forms part of the central protuberance. In the 70S ribosome it contacts protein S13 of the 30S subunit (bridge B1b), connecting the 2 subunits; this bridge is implicated in subunit movement. Contacts the P site tRNA; the 5S rRNA and some of its associated proteins might help stabilize positioning of ribosome-bound tRNAs. The chain is Large ribosomal subunit protein uL5 from Leuconostoc mesenteroides subsp. mesenteroides (strain ATCC 8293 / DSM 20343 / BCRC 11652 / CCM 1803 / JCM 6124 / NCDO 523 / NBRC 100496 / NCIMB 8023 / NCTC 12954 / NRRL B-1118 / 37Y).